A 669-amino-acid polypeptide reads, in one-letter code: DNA ligase (669 aa).

NAD(+) is bound by residues 33–37, 82–83, and E114; these read DAEYD and SL. K116 (N6-AMP-lysine intermediate) is an active-site residue. R137, E174, K291, and K315 together coordinate NAD(+). Zn(2+) contacts are provided by C409, C412, C427, and C433. One can recognise a BRCT domain in the interval 593 to 669; that stretch reads EIPQPLAGKV…QTEQDLLALL (77 aa).

This sequence belongs to the NAD-dependent DNA ligase family. LigA subfamily. Mg(2+) is required as a cofactor. Mn(2+) serves as cofactor.

It carries out the reaction NAD(+) + (deoxyribonucleotide)n-3'-hydroxyl + 5'-phospho-(deoxyribonucleotide)m = (deoxyribonucleotide)n+m + AMP + beta-nicotinamide D-nucleotide.. In terms of biological role, DNA ligase that catalyzes the formation of phosphodiester linkages between 5'-phosphoryl and 3'-hydroxyl groups in double-stranded DNA using NAD as a coenzyme and as the energy source for the reaction. It is essential for DNA replication and repair of damaged DNA. The protein is DNA ligase of Vibrio vulnificus (strain CMCP6).